A 131-amino-acid chain; its full sequence is Small ribosomal subunit protein uS11 (131 aa).

The protein belongs to the universal ribosomal protein uS11 family. Part of the 30S ribosomal subunit. Interacts with proteins S7 and S18. Binds to IF-3.

Its function is as follows. Located on the platform of the 30S subunit, it bridges several disparate RNA helices of the 16S rRNA. Forms part of the Shine-Dalgarno cleft in the 70S ribosome. The chain is Small ribosomal subunit protein uS11 from Helicobacter pylori (strain P12).